Consider the following 176-residue polypeptide: Ribosome rescue factor SmrB (176 aa).

The 76-residue stretch at 98-173 (LDLHGLTQKQ…GTAALLLLIE (76 aa)) folds into the Smr domain.

Belongs to the SmrB family. As to quaternary structure, associates with collided ribosomes, but not with correctly translating polysomes.

Acts as a ribosome collision sensor. Detects stalled/collided disomes (pairs of ribosomes where the leading ribosome is stalled and a second ribosome has collided with it) and endonucleolytically cleaves mRNA at the 5' boundary of the stalled ribosome. Stalled/collided disomes form a new interface (primarily via the 30S subunits) that binds SmrB. Cleaved mRNA becomes available for tmRNA ligation, leading to ribosomal subunit dissociation and rescue of stalled ribosomes. The protein is Ribosome rescue factor SmrB of Yersinia pseudotuberculosis serotype O:1b (strain IP 31758).